The chain runs to 188 residues: Large ribosomal subunit protein uL22 (188 aa).

Residues 155-188 form a disordered region; the sequence is STPEGAKKGKKKKGTKDAVEKSSKRVKTAATAAH.

This sequence belongs to the universal ribosomal protein uL22 family.

The sequence is that of Large ribosomal subunit protein uL22 (RpL17) from Agriotes lineatus (Lined click beetle).